We begin with the raw amino-acid sequence, 364 residues long: NF-kappa-B inhibitor epsilon (364 aa).

The segment at 1 to 108 (MSDARKGPDE…GSPLPPAGVL (108 aa)) is disordered. S18 is subject to Phosphoserine. The segment covering 36–48 (PGSGSSQSGCPQP) has biased composition (low complexity). Over residues 51–70 (HAPETHKEPEKEDADGERAD) the composition is skewed to basic and acidic residues. Over residues 93–104 (PSPPAPGSPLPP) the composition is skewed to pro residues. ANK repeat units follow at residues 122 to 155 (DGDT…DIQN), 157 to 186 (LYQT…SRIL), 190 to 219 (HGDT…EPGR), 233 to 262 (QGLA…DIDV), 267 to 296 (SGKT…RVDA), and 300 to 329 (NGCT…DSLL).

Belongs to the NF-kappa-B inhibitor family. In terms of assembly, interacts with RELA, REL, NFKB1 nuclear factor NF-kappa-B p50 subunit and NFKB2 nuclear factor NF-kappa-B p52 subunit. Interacts with HNRNPA2B1; the interaction may be mediated by the RRM2 domain of HNRNPA2B1, and HNRNPA2B1 may interact simultaneously with FAM76B and either NFKBIA or NFKBIE to form a complex. Post-translationally, serine phosphorylated; followed by proteasome-dependent degradation.

The protein localises to the cytoplasm. Functionally, sequesters NF-kappa-B transcription factor complexes in the cytoplasm, thereby inhibiting their activity. Sequestered complexes include NFKB1/p50-RELA/p65 and NFKB1/p50-REL/c-Rel complexes. Limits B-cell activation in response to pathogens, and also plays an important role in B-cell development. The protein is NF-kappa-B inhibitor epsilon (Nfkbie) of Mus musculus (Mouse).